We begin with the raw amino-acid sequence, 77 residues long: Metallothionein-like protein 2B (77 aa).

The protein belongs to the metallothionein superfamily. Type 15 family. In terms of tissue distribution, expressed in vascular tissues of all organs. Expressed in root and leaf phloem, pollen and root hairs.

In terms of biological role, metallothioneins have a high content of cysteine residues that bind various heavy metals. Functions as a metal chelator of copper (Cu) and zinc (Zn). Functions cooperatively with the phytochelatin synthase PCS1 to protect plants from Cu and cadmium toxicity. Plays a role in Cu homeostasis, specifically in the remobilization of Cu from senescing leaves. The mobilization of Cu from internal sources is important for seed development. The chain is Metallothionein-like protein 2B (MT2B) from Arabidopsis thaliana (Mouse-ear cress).